A 394-amino-acid chain; its full sequence is Stabilizer of axonemal microtubules 2 (394 aa).

Mn stretches follow at residues 110-122, 144-158, 244-256, 278-292, 312-324, and 346-360; these read STTF…PQEI, DTSH…QLEV, NSTS…PYQA, KSTT…EICR, LSTF…PHEL, and VTMY…KQEI.

It belongs to the FAM154 family.

The protein is Stabilizer of axonemal microtubules 2 (Saxo2) of Mus musculus (Mouse).